The primary structure comprises 865 residues: Anaphase-promoting complex subunit 6 (865 aa).

TPR repeat units lie at residues 11 to 42, 46 to 75, and 88 to 149; these read IEKQ…LNLV, SKEY…LIQK, and EDYQ…LQIL. Residues 153 to 293 form a disordered region; sequence NDSSENMDDE…NNNNNNNNNF (141 aa). The segment covering 183-202 has biased composition (acidic residues); sequence NCDDDDDDDDDDDDDDDDEK. Over residues 249-292 the composition is skewed to low complexity; sequence NKNNNKNNNNNNNNNNNNNNNNNNNNNNNNNNNNNNNNNNNNNN. TPR repeat units lie at residues 300 to 331, 336 to 359, 366 to 438, 478 to 506, 515 to 542, 573 to 602, 607 to 635, 642 to 670, and 675 to 709; these read IRSS…ALLT, FEAF…LLEK, DSWI…DIST, DIQT…ILKQ, CLMV…LVDS, AISW…STTL, GASW…TSSR, LPLL…AKDI, and PMIF…KIKS. The span at 403–434 shows a compositional bias: low complexity; the sequence is SNNNTFGANNNNNNNNNNNNNNNNNNNNNSNN. Residues 403-436 form a disordered region; sequence SNNNTFGANNNNNNNNNNNNNNNNNNNNNSNNDI. The interval 738 to 767 is disordered; it reads GIGNNNNNNNNRRTTTTTTTTSNNQKKNSS. TPR repeat units follow at residues 777–809 and 814–843; these read ESWE…SLSL and PSTY…SLSI.

It belongs to the APC6/CDC16 family. In terms of assembly, the APC/C is composed of at least 13 subunits that stay tightly associated throughout the cell cycle: anapc1, anapc2, anapc3, anapc4, anapc5, anapc6, anapc7, anapc8, anapc10, anapc11, cdc20, cdc26 and cdh1.

It localises to the nucleus. It participates in protein modification; protein ubiquitination. In terms of biological role, component of the anaphase promoting complex/cyclosome (APC/C), a cell cycle-regulated E3 ubiquitin-protein ligase complex that controls progression through mitosis and the G1 phase of the cell cycle. The chain is Anaphase-promoting complex subunit 6 (anapc6) from Dictyostelium discoideum (Social amoeba).